We begin with the raw amino-acid sequence, 995 residues long: MGVFCWSGCLVISLQLLLGAALDNLSTCKEEDYHYEYTECDSTGSRWRVAVPNPGKACAGLPDPVKGKECTFSCAAGEFLEISSQLCSKCEPGTYSLGTGIKFDEWDKMPQGFSNVATYMENTAEFSDNKPDSCVNSSWIPRGNYIESNSDDCTVSLIYAVHLKKAGSVSFEYQYLDNNIFFEFFIQNDQCQEMSSSSDKWVKLSDNSDWMNHMVSLKSGTNILYWRTTGILMGTKVAKPVLIKNITIEGVAYTSECFPCKPGTYSDEAGSSSCKICPRNTYSDRQAKECIKCFEEKEYSEEGASKCEERPPCTKKDLFQIHTPCDSERKTQVIYKWIEPKICREELPASIKLPASGNKEDCPPCNPGYFSNGTSACSPCPVGTYSNGLSECKTCPAGTEPVLGFEYKWWNILPGNMKTSCFNVGNSKCDGMNGWEVAGDHIQSGIGGTDNDYLILNLHISGFKPPTSVTGATGAELGRVTFVFENICVSDCVLYFMVDINRKSTSLVESFAGRKVYQSYTHVIHKNATYMFTWAFQRTNLAQDSRRFVNDIAKIYSIMVTNAIDGVSSSCRACALGPQQLGSSCVPCPAGHYIDKESNMCKECPPNTYLTPHQVYGKEACVPCGPGSKSNKDHSACYSECLVTYTNENQTLSYNFNNLGKVATLLNGPSFTSKGTKYYHLFNMSLCGHGGEKMAVCTDNITDVTGKDIEADSDDYSNVVKTFVCQSTIIPSDSKGFRTALSSQSVNLADSFLGVTNNSSLRGITISPDIFPSHLKIPDVNFFFKSLATTSSCEQGRATVISMRCNPAKLGQGDISVPRNCPAATCDGCNFYFLWETAEACPLCMESDYQKIEGACKHGQQETHYVWNEMKLCTNGVSLPEKNVSACESIDFWLKVGAGVGAFTAVLLIALTCYFWKKNQKLEYKYSKLVITANSKECELPAPDSCAIMEGEDNEDDVIYSNKQSLLEKLKSLATKEKEHNFESVQLKSSRAQNI.

The N-terminal stretch at 1–21 (MGVFCWSGCLVISLQLLLGAA) is a signal peptide. Residues 22–895 (LDNLSTCKEE…ACESIDFWLK (874 aa)) are Extracellular-facing. Asparagine 24, asparagine 136, asparagine 245, asparagine 372, asparagine 527, asparagine 649, asparagine 683, asparagine 700, and asparagine 758 each carry an N-linked (GlcNAc...) asparagine glycan. The 205-residue stretch at 639-843 (SECLVTYTNE…LWETAEACPL (205 aa)) folds into the MRH domain. 2 disulfide bridges follow: cysteine 641-cysteine 687 and cysteine 697-cysteine 725. Intrachain disulfides connect cysteine 793-cysteine 829 and cysteine 805-cysteine 841. N-linked (GlcNAc...) asparagine glycosylation is present at asparagine 883. Residues 896–916 (VGAGVGAFTAVLLIALTCYFW) traverse the membrane as a helical segment. At 917 to 995 (KKNQKLEYKY…QLKSSRAQNI (79 aa)) the chain is on the cytoplasmic side.

This sequence belongs to the ELAPOR family. Expressed in the animal half of the embryo during gastrulation, becoming restricted to the ventral ectoderm at stage 12.5. At the neurula stage, expressed in the anterior ectoderm surrounding the neural plate, and weakly in the epidermis. Expression is especially high in the presumptive hatching gland and cement gland regions. Surprisingly, by the tailbud stage (stage 22), expression is limited to the hatching gland and is not seen in the cement gland. Conversely, in tadpoles expressed broadly in the head, heart and fin. Expression in the head is seen in the primary mouth and in the brain, eyes, otic vesicles and olfactory pits.

The protein resides in the cell membrane. Functionally, functions as a regulator of the BMP signaling pathway and is involved in epidermal differentiation. The polypeptide is Endosome/lysosome-associated apoptosis and autophagy regulator family member 2 (elapor2) (Xenopus laevis (African clawed frog)).